Here is a 394-residue protein sequence, read N- to C-terminus: Phosphopentomutase (394 aa).

The Mn(2+) site is built by aspartate 14, aspartate 287, histidine 292, aspartate 328, histidine 329, and histidine 340.

The protein belongs to the phosphopentomutase family. It depends on Mn(2+) as a cofactor.

It localises to the cytoplasm. The enzyme catalyses 2-deoxy-alpha-D-ribose 1-phosphate = 2-deoxy-D-ribose 5-phosphate. The catalysed reaction is alpha-D-ribose 1-phosphate = D-ribose 5-phosphate. Its pathway is carbohydrate degradation; 2-deoxy-D-ribose 1-phosphate degradation; D-glyceraldehyde 3-phosphate and acetaldehyde from 2-deoxy-alpha-D-ribose 1-phosphate: step 1/2. Isomerase that catalyzes the conversion of deoxy-ribose 1-phosphate (dRib-1-P) and ribose 1-phosphate (Rib-1-P) to deoxy-ribose 5-phosphate (dRib-5-P) and ribose 5-phosphate (Rib-5-P), respectively. The polypeptide is Phosphopentomutase (Listeria monocytogenes serovar 1/2a (strain ATCC BAA-679 / EGD-e)).